The following is a 186-amino-acid chain: RNA polymerase sigma factor NccH (186 aa).

Positions 49-62 match the Polymerase core binding motif; sequence DIVQDTFIAAWHAL. Positions 152 to 171 form a DNA-binding region, H-T-H motif; sequence HPEAAMALGTSAKAVESRVA.

The protein belongs to the sigma-70 factor family. ECF subfamily.

Sigma factors are initiation factors that promote the attachment of RNA polymerase to specific initiation sites and are then released. This sigma factor regulates the genes for a membrane-located efflux system that confers resistance to nickel, cobalt and cadmium. This Alcaligenes xylosoxydans xylosoxydans (Achromobacter xylosoxidans) protein is RNA polymerase sigma factor NccH (nccH).